A 92-amino-acid chain; its full sequence is Small ribosomal subunit protein uS19c (92 aa).

It belongs to the universal ribosomal protein uS19 family.

The protein localises to the plastid. Its function is as follows. Protein S19 forms a complex with S13 that binds strongly to the 16S ribosomal RNA. The sequence is that of Small ribosomal subunit protein uS19c from Cuscuta reflexa (Southern Asian dodder).